We begin with the raw amino-acid sequence, 260 residues long: MLTFIGLGLYDERSISIAGRDALQAADYVAAEFYTSYLVDATVSDLETAHDIDIDVRDREGVEQHPEDILRKAQSEDVAFLTAGDTMISTTHTDLRLRAIDRGIDTRVIHGVTAQTAASGLTGLQNYRFGKSVTLPFPYAHGAEGVPTSVTDSIAANRERGLHTVVYLDIKANRDEYLRASDAAEMLATDLEDMLAIAVARAGSPDPTVRADRLSALAEKDFGDPLHLLVLPGELHHLEEEALAALADAPADMLNAVDSQ.

S-adenosyl-L-methionine-binding positions include L9, D85, I88, 113 to 114 (TA), L168, A202, and H227.

The protein belongs to the diphthine synthase family. In terms of assembly, homodimer.

It carries out the reaction 2-[(3S)-amino-3-carboxypropyl]-L-histidyl-[translation elongation factor 2] + 3 S-adenosyl-L-methionine = diphthine-[translation elongation factor 2] + 3 S-adenosyl-L-homocysteine + 3 H(+). The protein operates within protein modification; peptidyl-diphthamide biosynthesis. In terms of biological role, S-adenosyl-L-methionine-dependent methyltransferase that catalyzes the trimethylation of the amino group of the modified target histidine residue in translation elongation factor 2 (EF-2), to form an intermediate called diphthine. The three successive methylation reactions represent the second step of diphthamide biosynthesis. In Haloquadratum walsbyi (strain DSM 16790 / HBSQ001), this protein is Diphthine synthase.